Here is an 86-residue protein sequence, read N- to C-terminus: YcgL domain-containing protein XAC4085 (86 aa).

The region spanning 1–83 (MHAYVYKSQR…PKTIVLAGEC (83 aa)) is the YcgL domain.

This Xanthomonas axonopodis pv. citri (strain 306) protein is YcgL domain-containing protein XAC4085.